The chain runs to 354 residues: Glutamine synthetase cytosolic isozyme 1-3 (354 aa).

An N-acetylserine modification is found at Ser2. Residues Ser2 and Ser48 each carry the phosphoserine modification. The GS beta-grasp domain occupies 19–99 (IIAEYIWIGG…VMCDAYTPAG (81 aa)). In terms of domain architecture, GS catalytic spans 106–354 (KRHNAAKIFS…SMIAETTILG (249 aa)).

This sequence belongs to the glutamine synthetase family. Homooctamer. Expressed in the pericycle in the region of mature root.

The protein resides in the cytoplasm. The catalysed reaction is L-glutamate + NH4(+) + ATP = L-glutamine + ADP + phosphate + H(+). Its function is as follows. Low-affinity glutamine synthetase. May contribute to the homeostatic control of glutamine synthesis in roots. In Arabidopsis thaliana (Mouse-ear cress), this protein is Glutamine synthetase cytosolic isozyme 1-3 (GLN1-3).